Consider the following 237-residue polypeptide: Large ribosomal subunit protein uL1 (237 aa).

It belongs to the universal ribosomal protein uL1 family. As to quaternary structure, part of the 50S ribosomal subunit.

Its function is as follows. Binds directly to 23S rRNA. The L1 stalk is quite mobile in the ribosome, and is involved in E site tRNA release. Functionally, protein L1 is also a translational repressor protein, it controls the translation of the L11 operon by binding to its mRNA. This Chloroflexus aggregans (strain MD-66 / DSM 9485) protein is Large ribosomal subunit protein uL1.